The following is a 504-amino-acid chain: Peroxisomal N(1)-acetyl-spermine/spermidine oxidase (504 aa).

FAD-binding positions include A16, E37, R45, and 61-62 (HW). Substrate-binding residues include H64 and V187. V240 contributes to the FAD binding site. Substrate is bound at residue N313. FAD is bound by residues E465 and 474–475 (TT). Residues 502–504 (PRL) carry the Microbody targeting signal motif.

It belongs to the flavin monoamine oxidase family. Monomer. The cofactor is FAD. Widely expressed at different developmental stages. Expressed at high level in the liver and the stomach, expressed at lower level in heart, spleen, thymus, small intestine, muscle, pancreas, uterus, and breast and expressed at very low level in brain, kidney, lung, testis, skin, adrenal gland and prostate gland.

The protein resides in the peroxisome. Its subcellular location is the cytoplasm. It catalyses the reaction N(1)-acetylspermine + O2 + H2O = 3-acetamidopropanal + spermidine + H2O2. The catalysed reaction is N(1)-acetylspermidine + O2 + H2O = 3-acetamidopropanal + putrescine + H2O2. The enzyme catalyses N(1),N(12)-diacetylspermine + O2 + H2O = 3-acetamidopropanal + N(1)-acetylspermidine + H2O2. It participates in amine and polyamine metabolism; spermine metabolism. Flavoenzyme which catalyzes the oxidation of N(1)-acetylspermine to spermidine and is thus involved in the polyamine back-conversion. Can also oxidize N(1)-acetylspermidine to putrescine. Substrate specificity: N(1)-acetylspermine = N(1)-acetylspermidine &gt; N(1),N(12)-diacylspermine &gt;&gt; spermine. Does not oxidize spermidine. Plays an important role in the regulation of polyamine intracellular concentration and has the potential to act as a determinant of cellular sensitivity to the antitumor polyamine analogs. This Mus musculus (Mouse) protein is Peroxisomal N(1)-acetyl-spermine/spermidine oxidase (Paox).